The following is a 35-amino-acid chain: Photosystem II reaction center protein T (35 aa).

Residues 3-23 (ALVYTFLLVSTLGIIFFAIFF) traverse the membrane as a helical segment.

This sequence belongs to the PsbT family. As to quaternary structure, PSII is composed of 1 copy each of membrane proteins PsbA, PsbB, PsbC, PsbD, PsbE, PsbF, PsbH, PsbI, PsbJ, PsbK, PsbL, PsbM, PsbT, PsbY, PsbZ, Psb30/Ycf12, at least 3 peripheral proteins of the oxygen-evolving complex and a large number of cofactors. It forms dimeric complexes.

It localises to the plastid. It is found in the chloroplast thylakoid membrane. Functionally, found at the monomer-monomer interface of the photosystem II (PS II) dimer, plays a role in assembly and dimerization of PSII. PSII is a light-driven water plastoquinone oxidoreductase, using light energy to abstract electrons from H(2)O, generating a proton gradient subsequently used for ATP formation. The chain is Photosystem II reaction center protein T from Metasequoia glyptostroboides (Dawn redwood).